The following is a 256-amino-acid chain: UPF0644 protein PB2B4.06 (256 aa).

A helical transmembrane segment spans residues 34–56; that stretch reads GVVYAGVSGTCAAAGYMFGNFVM.

The protein belongs to the UPF0644 family.

The protein resides in the mitochondrion membrane. This chain is UPF0644 protein PB2B4.06, found in Schizosaccharomyces pombe (strain 972 / ATCC 24843) (Fission yeast).